Reading from the N-terminus, the 142-residue chain is Large ribosomal subunit protein uL13 (142 aa).

Belongs to the universal ribosomal protein uL13 family. As to quaternary structure, part of the 50S ribosomal subunit.

This protein is one of the early assembly proteins of the 50S ribosomal subunit, although it is not seen to bind rRNA by itself. It is important during the early stages of 50S assembly. This chain is Large ribosomal subunit protein uL13, found in Psychromonas ingrahamii (strain DSM 17664 / CCUG 51855 / 37).